Here is a 316-residue protein sequence, read N- to C-terminus: Ferrochelatase (316 aa).

H190 and E271 together coordinate Fe cation.

It belongs to the ferrochelatase family.

The protein localises to the cytoplasm. It catalyses the reaction heme b + 2 H(+) = protoporphyrin IX + Fe(2+). It participates in porphyrin-containing compound metabolism; protoheme biosynthesis; protoheme from protoporphyrin-IX: step 1/1. Functionally, catalyzes the ferrous insertion into protoporphyrin IX. The sequence is that of Ferrochelatase from Sulfurimonas denitrificans (strain ATCC 33889 / DSM 1251) (Thiomicrospira denitrificans (strain ATCC 33889 / DSM 1251)).